Reading from the N-terminus, the 149-residue chain is Calmodulin-like protein (149 aa).

4 EF-hand domains span residues 6-41, 42-76, 78-113, and 113-148; these read TTQALYKEAFNLFDKDKDGKITIQELGIVMRSVGSN, PTQQELKDIAKEIDDGSGLVDFSKFSSLMTRKMKY, DSEADIKQAFKVFDKKGNGYANIQDLKHTLTSIGEK, and KLTKEEFDNMLKDAKTVDGQIHVDEFVRVIKSSKSF. Ca(2+) is bound by residues Asp19, Asp21, Asp23, Lys25, and Glu30.

The protein belongs to the calmodulin family.

Its subcellular location is the contractile vacuole. Its function is as follows. Mediates the control of a large number of enzymes, ion channels and other proteins by Ca(2+) ions. Among the enzymes to be stimulated by the calmodulin-Ca(2+) complex are a number of protein kinases and phosphatases. In Dictyostelium discoideum (Social amoeba), this protein is Calmodulin-like protein (calB).